We begin with the raw amino-acid sequence, 191 residues long: MIGAVLAGGRGKRFGGDKLLYRINGKPLILYTIERLETAKKIDEIILVASKDNAEKLEKLGYRVVVDNLLIGPMGGVYTALSLGDAFVVAGDMPLLVPEFVDFIISEFKKSGKTACVPRWENGYLEPLHAAYSSAFREVLEEKIKAGNYALNRAIREVNPCYLPIESLPEEWRESFFNVNTREDLGKLHKG.

GTP contacts are provided by residues 6–8, Lys18, Asp67, and Asp92; that span reads LAG. Asp92 is a binding site for Mg(2+).

It belongs to the MobA family. Mg(2+) serves as cofactor.

It is found in the cytoplasm. The catalysed reaction is Mo-molybdopterin + GTP + H(+) = Mo-molybdopterin guanine dinucleotide + diphosphate. Its function is as follows. Transfers a GMP moiety from GTP to Mo-molybdopterin (Mo-MPT) cofactor (Moco or molybdenum cofactor) to form Mo-molybdopterin guanine dinucleotide (Mo-MGD) cofactor. The protein is Probable molybdenum cofactor guanylyltransferase of Thermococcus gammatolerans (strain DSM 15229 / JCM 11827 / EJ3).